The sequence spans 392 residues: Probable Ni/Fe-hydrogenase 2 b-type cytochrome subunit (392 aa).

The Periplasmic segment spans residues 1-11 (MSHDPQPLGGK). Residues 12–32 (IISKPVMIFGPLIVICMLLIV) traverse the membrane as a helical segment. Residues 33 to 34 (KR) are Cytoplasmic-facing. The helical transmembrane segment at 35–55 (LVFGLGSVSDLNGGFPWGVWI) threads the bilayer. At 56 to 58 (AFD) the chain is on the periplasmic side. A helical transmembrane segment spans residues 59–79 (LLIGTGFACGGWALAWAVYVF). The Cytoplasmic portion of the chain corresponds to 80 to 90 (NRGQYHPLVRP). Residues 91 to 111 (ALLASLFGYSLGGLSITIDVG) form a helical membrane-spanning segment. Over 112–133 (RYWNLPYFYIPGHFNVNSVLFE) the chain is Periplasmic. The helical transmembrane segment at 134 to 154 (TAVCMTIYIGVMALEFAPALF) threads the bilayer. Residues 155-168 (ERLGWKVSLQRLNK) are Cytoplasmic-facing. A helical membrane pass occupies residues 169-189 (VMFFIIALGALLPTMHQSSMG). Over 190–207 (SLMISAGYKVHPLWQSYE) the chain is Periplasmic. A helical membrane pass occupies residues 208–228 (MLPLFSLLTAFIMGFSIVIFE). The Cytoplasmic portion of the chain corresponds to 229-249 (GSLVQAGLRGNGPDEKSLFVK). Residues 250–270 (LTNTISVLLAIFIVLRFGELI) traverse the membrane as a helical segment. Topologically, residues 271–281 (YRDKLSLAFAG) are periplasmic. The chain crosses the membrane as a helical span at residues 282–302 (DFYSVMFWIEVLLMLFPLVVL). The Cytoplasmic portion of the chain corresponds to 303-333 (RVAKLRNDSRMLFLSALSALLGCATWRLTYS). A helical membrane pass occupies residues 334–354 (LVAFNPGGGYAYFPTWEELLI). A topological domain (periplasmic) is located at residue serine 355. The chain crosses the membrane as a helical span at residues 356–376 (IGFVAIEICAYIVLIRLLPIL). Residues 377–392 (PPLKQNDHNRHEASKA) lie on the Cytoplasmic side of the membrane.

Belongs to the NrfD family.

It localises to the cell inner membrane. Its function is as follows. Probable b-type cytochrome. The sequence is that of Probable Ni/Fe-hydrogenase 2 b-type cytochrome subunit (hybB) from Escherichia coli (strain K12).